The chain runs to 206 residues: FMN-dependent NADH:quinone oxidoreductase (206 aa).

Residues S10, 16 to 18 (SSS), 93 to 96 (MYNF), and 137 to 140 (TRGG) contribute to the FMN site.

This sequence belongs to the azoreductase type 1 family. As to quaternary structure, homodimer. The cofactor is FMN.

The enzyme catalyses 2 a quinone + NADH + H(+) = 2 a 1,4-benzosemiquinone + NAD(+). It carries out the reaction N,N-dimethyl-1,4-phenylenediamine + anthranilate + 2 NAD(+) = 2-(4-dimethylaminophenyl)diazenylbenzoate + 2 NADH + 2 H(+). Functionally, quinone reductase that provides resistance to thiol-specific stress caused by electrophilic quinones. Also exhibits azoreductase activity. Catalyzes the reductive cleavage of the azo bond in aromatic azo compounds to the corresponding amines. The sequence is that of FMN-dependent NADH:quinone oxidoreductase from Psychromonas ingrahamii (strain DSM 17664 / CCUG 51855 / 37).